A 172-amino-acid polypeptide reads, in one-letter code: Shikimate kinase (172 aa).

14 to 19 (GAGKST) contacts ATP. Mg(2+) is bound at residue S18. D36, R60, and G82 together coordinate substrate. Residue R120 coordinates ATP. R140 is a substrate binding site. ATP is bound at residue Q157.

Belongs to the shikimate kinase family. As to quaternary structure, monomer. Mg(2+) serves as cofactor.

The protein localises to the cytoplasm. The catalysed reaction is shikimate + ATP = 3-phosphoshikimate + ADP + H(+). It participates in metabolic intermediate biosynthesis; chorismate biosynthesis; chorismate from D-erythrose 4-phosphate and phosphoenolpyruvate: step 5/7. In terms of biological role, catalyzes the specific phosphorylation of the 3-hydroxyl group of shikimic acid using ATP as a cosubstrate. The polypeptide is Shikimate kinase (Aeromonas salmonicida (strain A449)).